Here is a 321-residue protein sequence, read N- to C-terminus: Cytochrome c biogenesis protein CcsA (321 aa).

7 consecutive transmembrane segments (helical) span residues 9-29, 44-64, 68-88, 143-163, 226-246, 260-274, and 289-309; these read ILTH…LITL, GMIA…ASSG, LSNL…LHMI, MLLS…LLMI, VISL…VWAN, TWAF…IYLH, and VASI…LLGI.

The protein belongs to the CcmF/CycK/Ccl1/NrfE/CcsA family. As to quaternary structure, may interact with Ccs1.

It is found in the plastid. The protein localises to the chloroplast thylakoid membrane. In terms of biological role, required during biogenesis of c-type cytochromes (cytochrome c6 and cytochrome f) at the step of heme attachment. The sequence is that of Cytochrome c biogenesis protein CcsA from Oryza sativa subsp. indica (Rice).